A 136-amino-acid polypeptide reads, in one-letter code: MARTKQTARKSTGGKAPRKQLATKAARKSAPATGGVKKPHRYRPGTVALREIRRYQKSTELLIRKLPFQRLVREIAQDFKTDLRFQSSAVMALQEASEAYLVGLFEDTNLCAIHAKRVTIMPKDIQLARRIRGERA.

The interval 1-43 (MARTKQTARKSTGGKAPRKQLATKAARKSAPATGGVKKPHRYR) is disordered. An N6-methylated lysine modification is found at lysine 5. N6-acetyllysine; alternate is present on lysine 10. Lysine 10 carries the N6-methylated lysine; alternate modification. At serine 11 the chain carries Phosphoserine. 2 positions are modified to N6-acetyllysine: lysine 15 and lysine 24. An N6-methylated lysine mark is found at lysine 28, lysine 37, and lysine 80.

It belongs to the histone H3 family. As to quaternary structure, the nucleosome is a histone octamer containing two molecules each of H2A, H2B, H3 and H4 assembled in one H3-H4 heterotetramer and two H2A-H2B heterodimers. The octamer wraps approximately 147 bp of DNA. Acetylation is generally linked to gene activation. In terms of processing, methylation at Lys-5 is linked to gene activation. Methylation at Lys-10 is linked to gene repression.

It is found in the nucleus. It localises to the chromosome. Its function is as follows. Core component of nucleosome. Nucleosomes wrap and compact DNA into chromatin, limiting DNA accessibility to the cellular machineries which require DNA as a template. Histones thereby play a central role in transcription regulation, DNA repair, DNA replication and chromosomal stability. DNA accessibility is regulated via a complex set of post-translational modifications of histones, also called histone code, and nucleosome remodeling. The polypeptide is Histone H3 (Platynereis dumerilii (Dumeril's clam worm)).